A 237-amino-acid polypeptide reads, in one-letter code: MAKTGKKFRAAAALVDRDKRYAVAEGFQLLKKTVEARSTKYDQTVDVSINLGVDPKHADQMVRGAVVLPHGTGATVRVAVFAKGEKATDATNAGADVVGAEDLQKRIEEGFLDFDTVIATPDMMGVVGRLGKVLGPRGLMPNPKVGTVTMDVAKAIRDAKGGKVDFRAEKAGIVHAKLGKSSFEVEKLEANFNALVDLVMKLKPAAAKGVYLQGIAISSSMGPGIKLDTMEIKTRHG.

This sequence belongs to the universal ribosomal protein uL1 family. Part of the 50S ribosomal subunit.

Its function is as follows. Binds directly to 23S rRNA. The L1 stalk is quite mobile in the ribosome, and is involved in E site tRNA release. Functionally, protein L1 is also a translational repressor protein, it controls the translation of the L11 operon by binding to its mRNA. The protein is Large ribosomal subunit protein uL1 of Myxococcus xanthus (strain DK1622).